The chain runs to 142 residues: Hemoglobin subunit alpha-3 (142 aa).

Residues 2–142 (VLSAADKSNV…VSTVLTSKYR (141 aa)) form the Globin domain. Position 59 (His59) interacts with O2. Residue His88 coordinates heme b.

It belongs to the globin family. As to quaternary structure, heterotetramer of two alpha chains and two beta chains. Red blood cells.

Involved in oxygen transport from the lung to the various peripheral tissues. This is Hemoglobin subunit alpha-3 from Bubalus bubalis (Domestic water buffalo).